Consider the following 418-residue polypeptide: Gamma-glutamyl phosphate reductase (418 aa).

It belongs to the gamma-glutamyl phosphate reductase family.

The protein resides in the cytoplasm. It carries out the reaction L-glutamate 5-semialdehyde + phosphate + NADP(+) = L-glutamyl 5-phosphate + NADPH + H(+). Its pathway is amino-acid biosynthesis; L-proline biosynthesis; L-glutamate 5-semialdehyde from L-glutamate: step 2/2. Its function is as follows. Catalyzes the NADPH-dependent reduction of L-glutamate 5-phosphate into L-glutamate 5-semialdehyde and phosphate. The product spontaneously undergoes cyclization to form 1-pyrroline-5-carboxylate. This is Gamma-glutamyl phosphate reductase from Desulfatibacillum aliphaticivorans.